An 840-amino-acid polypeptide reads, in one-letter code: Transient receptor potential cation channel subfamily V member 1 (840 aa).

A compositionally biased stretch (low complexity) spans 1-12 (MKNWGSSDSGGS). A disordered region spans residues 1–43 (MKNWGSSDSGGSEDPPQEDSCLDPLDGDPNSRPVPAKPHIFPT). At 1 to 433 (MKNWGSSDSG…QDKWDRFVKR (433 aa)) the chain is on the cytoplasmic side. 2 ANK repeats span residues 111–139 (KLYD…FLQK) and 154–186 (TGKT…QTDS). ATP-binding positions include R116, K156, K161, N165, 200-203 (YKGQ), and 211-212 (ER). 4 ANK repeats span residues 204 to 229 (TALH…ADVQ), 250 to 277 (ELPL…QPAD), 286 to 322 (NTVL…KLHP), and 336 to 359 (TPLA…REIQ). T371 is modified (phosphothreonine; by PKA; in vitro). An ANK 7 repeat occupies 394-416 (NSVLEVIAYSSSETPNRHDMLLV). A helical membrane pass occupies residues 434-455 (IFYFNFFIYCLYMIIFTTAAYY). At 456-473 (RPVDGLPPYKLKHTVGDY) the chain is on the extracellular side. Residues 474–498 (FRVTGEILSVLGGVYFFFRGIQYFL) traverse the membrane as a helical segment. Topologically, residues 499 to 511 (QRRPSLKTLFVDS) are cytoplasmic. The residue at position 503 (S503) is a Phosphoserine; by PKC/PRKCE. Resiniferatoxin is bound at residue 512-513 (YS). The helical transmembrane segment at 512–533 (YSEMLFFVQSLFMLGTVVLYFC) threads the bilayer. The Extracellular portion of the chain corresponds to 534–536 (HHK). Residues 537-557 (EYVASMVFSLAMGWTNMLYYT) form a helical membrane-spanning segment. T551 and R558 together coordinate resiniferatoxin. At 558–560 (RGF) the chain is on the cytoplasmic side. A helical transmembrane segment spans residues 561 to 599 (QQMGIYAVMIEKMILRDLCRFMFVYLVFLFGFSTAVVTL). The Extracellular portion of the chain corresponds to 600–631 (IEDGKNNSVPTESTLHRWRGPGCRPPDSSYNS). N605 is a glycosylation site (N-linked (GlcNAc...) asparagine). Positions 632–653 (LYSTCLELFKFTIGMGDLEFTE) form an intramembrane region, pore-forming. G645 contributes to the Na(+) binding site. Residues 645-648 (GMGD) carry the Selectivity filter motif. Position 648 (D648) interacts with Ca(2+). The Extracellular segment spans residues 654 to 657 (NYDF). The chain crosses the membrane as a helical span at residues 658–684 (KAVFIILLLAYVILTYILLLNMLIALM). Topologically, residues 685 to 840 (GETVNKIAQE…FKDPVGLGEK (156 aa)) are cytoplasmic. The segment at 686–714 (ETVNKIAQESKNIWKLQRAITILDTEKSF) is AD. At T706 the chain carries Phosphothreonine. An interaction with calmodulin region spans residues 769 to 803 (EGIKRTLSFSLRSGRVSGRNWKNFSLVPLLRDAST). The residue at position 776 (S776) is a Phosphoserine. The required for PIP2-mediated channel inhibition stretch occupies residues 779-794 (LRSGRVSGRNWKNFSL). Position 802 is a phosphoserine; by PKC/PRKCE and PKC/PRKCZ (S802). S822 carries the phosphoserine modification.

It belongs to the transient receptor (TC 1.A.4) family. TrpV subfamily. TRPV1 sub-subfamily. In terms of assembly, homotetramer. Interacts with PIRT. May also form a heteromeric channel with TRPV3. Interacts with CALM, PRKCM and CSK. Interacts with PRKCG and NTRK1, probably by forming a trimeric complex. Interacts with the Scolopendra mutilans RhTx toxin. Interacts with TMEM100. Interacts with PACS2. Phosphorylation by PKA reverses capsaicin-induced dephosphorylation at multiple sites. Phosphorylation by CAMKII seems to regulate binding to vanilloids. Phosphorylated and modulated by PRKCE, PRKCM and probably PRKCZ. Dephosphorylation by calcineurin seems to lead to receptor desensitization and phosphorylation by CAMKII recovers activity.

Its subcellular location is the postsynaptic cell membrane. It is found in the cell projection. It localises to the dendritic spine membrane. The protein localises to the cell membrane. It catalyses the reaction Ca(2+)(in) = Ca(2+)(out). The enzyme catalyses Mg(2+)(in) = Mg(2+)(out). It carries out the reaction Na(+)(in) = Na(+)(out). The catalysed reaction is K(+)(in) = K(+)(out). Its activity is regulated as follows. Channel activity is activated via the interaction with PIRT and phosphatidylinositol 4,5-bisphosphate (PIP2). Both PIRT and PIP2 are required to activate channel activity. The channel is sensitized by ATP binding. Repeated stimulation with capsaicin gives rise to progressively smaller responses, due to desensitization. This desensitization is triggered by the influx of calcium ions and is inhibited by elevated ATP levels. Ca(2+) and CALM displace ATP from its binding site and trigger a conformation change that leads to a closed, desensitized channel. Intracellular PIP2 inhibits desensitization. The double-knot toxin (DkTx) from the Chinese earth tiger tarantula activates the channel and traps it in an open conformation. The Scolopendra mutilans RhTx toxin potentiates the heat activation pathway mediated by this channel by binding to the charge-rich outer pore region (in an activated state). Functionally, non-selective calcium permeant cation channel involved in detection of noxious chemical and thermal stimuli. Seems to mediate proton influx and may be involved in intracellular acidosis in nociceptive neurons. Involved in mediation of inflammatory pain and hyperalgesia. Sensitized by a phosphatidylinositol second messenger system activated by receptor tyrosine kinases, which involves PKC isozymes and PCL. Activated by vanilloids, like capsaicin, and temperatures higher than 42 degrees Celsius. Upon activation, exhibits a time- and Ca(2+)-dependent outward rectification, followed by a long-lasting refractory state. Mild extracellular acidic pH (6.5) potentiates channel activation by noxious heat and vanilloids, whereas acidic conditions (pH &lt;6) directly activate the channel. Can be activated by endogenous compounds, including 12-hydroperoxytetraenoic acid and bradykinin. Acts as ionotropic endocannabinoid receptor with central neuromodulatory effects. Triggers a form of long-term depression (TRPV1-LTD) mediated by the endocannabinoid anandamine in the hippocampus and nucleus accumbens by affecting AMPA receptors endocytosis. The chain is Transient receptor potential cation channel subfamily V member 1 (TRPV1) from Canis lupus familiaris (Dog).